Here is a 138-residue protein sequence, read N- to C-terminus: Sec-independent protein translocase protein TatB (138 aa).

Residues 1–21 (MFDIGFSELLLIAVVALVVLG) form a helical membrane-spanning segment. The interval 116 to 138 (VHHVHVPPPSTSTHGNNGQEKSQ) is disordered. The span at 126 to 138 (TSTHGNNGQEKSQ) shows a compositional bias: polar residues.

This sequence belongs to the TatB family. As to quaternary structure, the Tat system comprises two distinct complexes: a TatABC complex, containing multiple copies of TatA, TatB and TatC subunits, and a separate TatA complex, containing only TatA subunits. Substrates initially bind to the TatABC complex, which probably triggers association of the separate TatA complex to form the active translocon.

It localises to the cell inner membrane. Part of the twin-arginine translocation (Tat) system that transports large folded proteins containing a characteristic twin-arginine motif in their signal peptide across membranes. Together with TatC, TatB is part of a receptor directly interacting with Tat signal peptides. TatB may form an oligomeric binding site that transiently accommodates folded Tat precursor proteins before their translocation. The protein is Sec-independent protein translocase protein TatB of Xylella fastidiosa (strain Temecula1 / ATCC 700964).